Consider the following 170-residue polypeptide: uncharacterized protein (170 aa).

The region spanning 25–151 (PALSPHLVVD…FGHHWSLGQP (127 aa)) is the VOC domain.

This is an uncharacterized protein from Mycobacterium tuberculosis (strain CDC 1551 / Oshkosh).